The chain runs to 262 residues: Protein NEGATIVE GRAVITROPIC RESPONSE OF ROOTS (262 aa).

Positions 1 to 40 (MKFFNWMQNKLGGKQENRKSNTSTSTTYAKPEPREEFSDW) are disordered. The IGT motif motif lies at 43 to 49 (SLLAIGT).

It belongs to the LAZY family.

Functionally, involved in the control of root gravitropism. The sequence is that of Protein NEGATIVE GRAVITROPIC RESPONSE OF ROOTS from Medicago truncatula (Barrel medic).